Here is a 1567-residue protein sequence, read N- to C-terminus: Ice nucleation protein (1567 aa).

Residues 130–185 show a composition bias toward low complexity; sequence PAAEPSAPATQATSATLPTPATPSTQATPSTQSTQSTQSTEATQSTEATPVATVAA. 13 disordered regions span residues 130-195, 270-329, 356-378, 449-474, 502-529, 594-620, 642-668, 689-716, 738-764, 785-810, 833-860, 929-959, and 977-1004; these read PAAE…QQHD, YGST…KGSD, AGSE…GSDV, TQTS…GSDI, SESS…YGST, QTAG…DVTA, QTSG…DVTA, TQTS…DVTA, and TQTS…AGYG. Polar residues predominate over residues 270-282; sequence YGSTQTAQEGSRL. Residues 283–296 are compositionally biased toward low complexity; it reads TSGYGSTATSGSDS. 4 stretches are compositionally biased toward polar residues: residues 302 to 325, 356 to 373, 449 to 469, and 502 to 519; these read YGST…QTAR, AGSE…QTAR, TQTS…QTAR, and SESS…AQQD. Low complexity predominate over residues 520–529; sequence SSLTTGYGST. 8 stretches are compositionally biased toward polar residues: residues 594-613, 642-661, 689-709, 738-757, 785-805, 833-853, 929-949, and 977-997; these read QTAG…QTAR, QTSG…QTAR, and TQTS…QTAR.

It belongs to the bacterial ice nucleation protein family.

The protein resides in the cell outer membrane. Ice nucleation proteins enable bacteria to nucleate crystallization in supercooled water. The protein is Ice nucleation protein (inaX) of Xanthomonas campestris pv. translucens.